A 232-amino-acid chain; its full sequence is Uracil-DNA glycosylase (232 aa).

Asp64 (proton acceptor) is an active-site residue.

It belongs to the uracil-DNA glycosylase (UDG) superfamily. UNG family.

The protein localises to the cytoplasm. It catalyses the reaction Hydrolyzes single-stranded DNA or mismatched double-stranded DNA and polynucleotides, releasing free uracil.. In terms of biological role, excises uracil residues from the DNA which can arise as a result of misincorporation of dUMP residues by DNA polymerase or due to deamination of cytosine. This chain is Uracil-DNA glycosylase, found in Shouchella clausii (strain KSM-K16) (Alkalihalobacillus clausii).